Consider the following 92-residue polypeptide: Small ribosomal subunit protein uS19c (92 aa).

This sequence belongs to the universal ribosomal protein uS19 family.

It is found in the plastid. Its subcellular location is the chloroplast. Protein S19 forms a complex with S13 that binds strongly to the 16S ribosomal RNA. The protein is Small ribosomal subunit protein uS19c of Cycas taitungensis (Prince sago).